Consider the following 352-residue polypeptide: Ion-translocating oxidoreductase complex subunit D (352 aa).

4 helical membrane-spanning segments follow: residues 20 to 40 (IMLL…WFFG), 42 to 62 (GTLF…AIVL), 69 to 91 (VASH…SIPP), and 123 to 143 (PAMI…TSWL). An FMN phosphoryl threonine modification is found at T187. 5 consecutive transmembrane segments (helical) span residues 215 to 235 (LAGV…VFLL), 242 to 262 (WHIP…GWLF), 267 to 287 (LASP…FFIL), 301 to 321 (LIFG…GGYP), and 322 to 342 (DGVA…DYYT).

It belongs to the NqrB/RnfD family. As to quaternary structure, the complex is composed of six subunits: RsxA, RsxB, RsxC, RsxD, RsxE and RsxG. Requires FMN as cofactor.

The protein resides in the cell inner membrane. Functionally, part of a membrane-bound complex that couples electron transfer with translocation of ions across the membrane. Required to maintain the reduced state of SoxR. The chain is Ion-translocating oxidoreductase complex subunit D from Salmonella enteritidis PT4 (strain P125109).